The primary structure comprises 285 residues: Energy-coupling factor transporter ATP-binding protein EcfA1 (285 aa).

Residues 9 to 246 (VTVEHLSFTY…VSLIKNAGLD (238 aa)) enclose the ABC transporter domain. Residue 43 to 50 (GHNGSGKS) coordinates ATP.

This sequence belongs to the ABC transporter superfamily. Energy-coupling factor EcfA family. As to quaternary structure, forms a stable energy-coupling factor (ECF) transporter complex composed of 2 membrane-embedded substrate-binding proteins (S component), 2 ATP-binding proteins (A component) and 2 transmembrane proteins (T component).

Its subcellular location is the cell membrane. Functionally, ATP-binding (A) component of a common energy-coupling factor (ECF) ABC-transporter complex. Unlike classic ABC transporters this ECF transporter provides the energy necessary to transport a number of different substrates. This Lactobacillus gasseri (strain ATCC 33323 / DSM 20243 / BCRC 14619 / CIP 102991 / JCM 1131 / KCTC 3163 / NCIMB 11718 / NCTC 13722 / AM63) protein is Energy-coupling factor transporter ATP-binding protein EcfA1.